The following is a 610-amino-acid chain: 1,8-cineol synthase, chloroplastic (610 aa).

Residues 1 to 51 constitute a chloroplast transit peptide; the sequence is MNHHLIITPIFHLQIMLPVATLKRPPPPAATCSIYSFSRGTPSLVSKARLS. (2E)-geranyl diphosphate is bound by residues R322, D359, D363, R500, and N503. Mg(2+)-binding residues include D359 and D363. Residues 359 to 363 carry the DDXXD motif motif; the sequence is DDVYD. Residues N503, T507, and E511 each contribute to the Mg(2+) site.

The protein belongs to the terpene synthase family. Tpsb subfamily. As to quaternary structure, monomer. The cofactor is Mg(2+). It depends on Mn(2+) as a cofactor. In terms of tissue distribution, confined to buds and flowers.

Its subcellular location is the plastid. It is found in the chloroplast. It catalyses the reaction (2E)-geranyl diphosphate + H2O = 1,8-cineole + diphosphate. The enzyme catalyses (2E)-geranyl diphosphate = limonene + diphosphate. It carries out the reaction (2E)-geranyl diphosphate = sabinene + diphosphate. The catalysed reaction is (2E)-geranyl diphosphate = (E)-beta-ocimene + diphosphate. It catalyses the reaction (2E)-geranyl diphosphate = beta-myrcene + diphosphate. The enzyme catalyses (2E)-geranyl diphosphate = alpha-pinene + diphosphate. It carries out the reaction (2E)-geranyl diphosphate + H2O = (S)-alpha-terpineol + diphosphate. It functions in the pathway secondary metabolite biosynthesis; terpenoid biosynthesis. In terms of biological role, monoterpene synthase involved in the biosynthesis of monoterpene natural products of the 'cineole cassette', volatile compounds present in floral scent. Catalyzes the conversion of (2E)-geranyl diphosphate (GPP) into 1,8-cineole and, as minor products, limonene, sabinene, (E)-beta-ocimene, beta-myrcene, alpha-pinene and alpha-terpineol. The polypeptide is 1,8-cineol synthase, chloroplastic (Nicotiana suaveolens (Australian tobacco)).